We begin with the raw amino-acid sequence, 506 residues long: Beta-glucosidase 9 (506 aa).

Residues 1–22 form the signal peptide; sequence MKHFSLLFIFLVILLATSYSDA. A beta-D-glucoside-binding positions include Gln42, His139, and 184-185; that span reads NE. Residue Glu185 is the Proton donor of the active site. An intrachain disulfide couples Cys204 to Cys212. 2 N-linked (GlcNAc...) asparagine glycosylation sites follow: Asn211 and Asn216. Tyr328 provides a ligand contact to a beta-D-glucoside. N-linked (GlcNAc...) asparagine glycosylation is present at Asn363. Position 396 (Glu396) interacts with a beta-D-glucoside. The Nucleophile role is filled by Glu396. Asn429 is a glycosylation site (N-linked (GlcNAc...) asparagine). Residues Trp439 and Phe455 each coordinate a beta-D-glucoside. N-linked (GlcNAc...) asparagine glycans are attached at residues Asn461, Asn483, and Asn499.

Belongs to the glycosyl hydrolase 1 family.

The enzyme catalyses Hydrolysis of terminal, non-reducing beta-D-glucosyl residues with release of beta-D-glucose.. The protein is Beta-glucosidase 9 of Arabidopsis thaliana (Mouse-ear cress).